Here is a 305-residue protein sequence, read N- to C-terminus: N-acyl-aromatic-L-amino acid amidohydrolase (carboxylate-forming) (305 aa).

Positions 15 and 18 each coordinate Zn(2+). Substrate is bound by residues Arg-57 and 64–65 (NR). His-108 contacts Zn(2+). Residues Glu-171 and Tyr-281 each contribute to the substrate site.

It belongs to the AspA/AstE family. Aspartoacylase subfamily. Homotetramer. Zn(2+) serves as cofactor.

It is found in the apical cell membrane. Its subcellular location is the cytoplasm. The catalysed reaction is an N-acyl-aromatic L-alpha-amino acid + H2O = an aromatic L-alpha-amino acid + a carboxylate. The enzyme catalyses an N-acetyl-L-cysteine-S-conjugate + H2O = an S-substituted L-cysteine + acetate. Its function is as follows. Plays an important role in deacetylating mercapturic acids in kidney proximal tubules. This is N-acyl-aromatic-L-amino acid amidohydrolase (carboxylate-forming) (acy3) from Xenopus laevis (African clawed frog).